A 113-amino-acid polypeptide reads, in one-letter code: T cell receptor alpha variable 12-2 (113 aa).

Positions 1-20 (MKSLRVLLVILWLQLSWVWS) are cleaved as a signal peptide. Positions 23–113 (KEVEQNSGPL…DSATYLCAVN (91 aa)) constitute an Ig-like domain. Residue Asn-43 is glycosylated (N-linked (GlcNAc...) asparagine). Cys-44 and Cys-110 form a disulfide bridge.

As to quaternary structure, alpha-beta TR is a heterodimer composed of an alpha and beta chain; disulfide-linked. The alpha-beta TR is associated with the transmembrane signaling CD3 coreceptor proteins to form the TR-CD3 (TcR or TCR). The assembly of alpha-beta TR heterodimers with CD3 occurs in the endoplasmic reticulum where a single alpha-beta TR heterodimer associates with one CD3D-CD3E heterodimer, one CD3G-CD3E heterodimer and one CD247 homodimer forming a stable octameric structure. CD3D-CD3E and CD3G-CD3E heterodimers preferentially associate with TR alpha and TR beta chains, respectively. The association of the CD247 homodimer is the last step of TcR assembly in the endoplasmic reticulum and is required for transport to the cell surface.

The protein localises to the cell membrane. Its function is as follows. V region of the variable domain of T cell receptor (TR) alpha chain that participates in the antigen recognition. Alpha-beta T cell receptors are antigen specific receptors which are essential to the immune response and are present on the cell surface of T lymphocytes. Recognize peptide-major histocompatibility (MH) (pMH) complexes that are displayed by antigen presenting cells (APC), a prerequisite for efficient T cell adaptive immunity against pathogens. Binding of alpha-beta TR to pMH complex initiates TR-CD3 clustering on the cell surface and intracellular activation of LCK that phosphorylates the ITAM motifs of CD3G, CD3D, CD3E and CD247 enabling the recruitment of ZAP70. In turn ZAP70 phosphorylates LAT, which recruits numerous signaling molecules to form the LAT signalosome. The LAT signalosome propagates signal branching to three major signaling pathways, the calcium, the mitogen-activated protein kinase (MAPK) kinase and the nuclear factor NF-kappa-B (NF-kB) pathways, leading to the mobilization of transcription factors that are critical for gene expression and essential for T cell growth and differentiation. The T cell repertoire is generated in the thymus, by V-(D)-J rearrangement. This repertoire is then shaped by intrathymic selection events to generate a peripheral T cell pool of self-MH restricted, non-autoaggressive T cells. Post-thymic interaction of alpha-beta TR with the pMH complexes shapes TR structural and functional avidity. In Homo sapiens (Human), this protein is T cell receptor alpha variable 12-2.